Consider the following 238-residue polypeptide: Tetraspanin-4 (238 aa).

Over 1-13 (MARACLQAVKYLM) the chain is Cytoplasmic. A helical transmembrane segment spans residues 14 to 34 (FAFNLLFWLGGCGVLGVGIWL). At 35-55 (AATQGSFATLSSSFPSLSAAN) the chain is on the extracellular side. The helical transmembrane segment at 56–76 (LLIITGAFVMAIGFVGCLGAI) threads the bilayer. Topologically, residues 77–85 (KENKCLLLT) are cytoplasmic. The chain crosses the membrane as a helical span at residues 86-106 (FFLLLLLVFLLEATIAILFFA). Topologically, residues 107-201 (YTDKIDRYAQ…ETVKVWLQEN (95 aa)) are extracellular. N-linked (GlcNAc...) asparagine glycosylation is found at Asn152 and Asn161. The chain crosses the membrane as a helical span at residues 202-222 (LLAVGIFGLCTALVQILGLTF). The Cytoplasmic portion of the chain corresponds to 223-238 (AMTMYCQVVKADTYCA).

This sequence belongs to the tetraspanin (TM4SF) family. Forms a complex with integrins. Interacts with HRH4. Expressed in multiple tissues but is absent in brain, lymphoid cells, and platelets.

Its subcellular location is the cell membrane. Structural component of specialized membrane microdomains known as tetraspanin-enriched microdomains (TERMs), which act as platforms for receptor clustering and signaling. Plays an essential role in migrasome formation and migration on retracting fibers at the rear end of migrating cells. Migrasomes are cellular organelles that form as large vesicle-like structures on retraction fibers of migrating cells. Mechanistically, acts as a membrane curvature sensor and participates in stabilizing the migrasome structure in a late stage of biogenesis. May also play a regulatory role for the histamine H4 receptor/HRH4 without affecting histamine binding to HRH4 or signaling. This Homo sapiens (Human) protein is Tetraspanin-4 (TSPAN4).